Reading from the N-terminus, the 217-residue chain is Harpin secretion protein HrcR (217 aa).

The next 4 membrane-spanning stretches (helical) occupy residues 11-31 (FALF…CTCF), 52-72 (PNMA…APVF), 158-178 (IGFL…NVLL), and 185-205 (VAPM…INGW).

It belongs to the FliP/MopC/SpaP family.

It is found in the cell membrane. In terms of biological role, required for the secretion of harpin. This is Harpin secretion protein HrcR (hrcR) from Erwinia amylovora (Fire blight bacteria).